Consider the following 146-residue polypeptide: MGFTAQQDALVGSSYEAFKQNLPSNSVLFYTLILEKAPAAKDMFSFLKASGPTHSPQLQAHAEKVFGLTRDAAAQLLAKGEVTLADAGLGAVHVQKAVADPHFAVVKEALLKTVQAAVGDKWSEDLSTAWGVAYDGLAAAIKKAMS.

The Globin domain maps to Gly2–Ser146. A phosphoserine; by CCAMK mark is found at Ser13 and Ser14. Tyr30 carries the nitrated tyrosine modification. 2 positions are modified to phosphoserine; by CCAMK: Ser45 and Ser55. Ser45 contributes to the heme b binding site. Residue His61 coordinates O2. Lys64, His93, and Lys96 together coordinate heme b. The residue at position 123 (Ser123) is a Phosphoserine; by CCAMK. Tyr134 carries the post-translational modification Nitrated tyrosine.

Belongs to the plant globin family. As to quaternary structure, monomer. Post-translationally, nitrated in effective nodules and particularly in hypoxic conditions; this mechanism may play a protective role in the symbiosis by buffering toxic peroxynitrite NO(2)(-). Nitration level decrease during nodule senescence. In terms of processing, phosphorylated by CCAMK at serine residues in a Ca(2+)-dependent manner; the phosphorylation at Ser-45 disrupts the molecular environment of its porphyrin ring oxygen binding pocket, thus leading to a reduced oxygen consumption and to the delivery of oxygen O(2) to symbiosomes. Specifically and strongly expressed in root nodules and at low levels in seedlings.

The protein localises to the cytoplasm. It is found in the cytosol. The protein resides in the nucleus. In terms of biological role, leghemoglobin that reversibly binds oxygen O(2) through a pentacoordinated heme iron. In root nodules, facilitates the diffusion of oxygen to the bacteroids while preventing the bacterial nitrogenase from being inactivated by buffering dioxygen, nitric oxide and carbon monoxide, and promoting the formation of reactive oxygen species (ROS, e.g. H(2)O(2)). This role is essential for symbiotic nitrogen fixation (SNF). This is Leghemoglobin 1 from Lotus japonicus (Lotus corniculatus var. japonicus).